A 142-amino-acid polypeptide reads, in one-letter code: Large ribosomal subunit protein uL11 (142 aa).

Belongs to the universal ribosomal protein uL11 family. In terms of assembly, part of the ribosomal stalk of the 50S ribosomal subunit. Interacts with L10 and the large rRNA to form the base of the stalk. L10 forms an elongated spine to which L12 dimers bind in a sequential fashion forming a multimeric L10(L12)X complex. One or more lysine residues are methylated.

Forms part of the ribosomal stalk which helps the ribosome interact with GTP-bound translation factors. The protein is Large ribosomal subunit protein uL11 of Vesicomyosocius okutanii subsp. Calyptogena okutanii (strain HA).